The sequence spans 20 residues: 26 kDa protein (20 aa).

This Bacillus cereus protein is 26 kDa protein.